Consider the following 121-residue polypeptide: Large ribosomal subunit protein bL20 (121 aa).

Belongs to the bacterial ribosomal protein bL20 family.

Binds directly to 23S ribosomal RNA and is necessary for the in vitro assembly process of the 50S ribosomal subunit. It is not involved in the protein synthesizing functions of that subunit. In Petrotoga mobilis (strain DSM 10674 / SJ95), this protein is Large ribosomal subunit protein bL20.